The primary structure comprises 185 residues: Ribosome-recycling factor (185 aa).

The protein belongs to the RRF family.

It localises to the cytoplasm. Functionally, responsible for the release of ribosomes from messenger RNA at the termination of protein biosynthesis. May increase the efficiency of translation by recycling ribosomes from one round of translation to another. The sequence is that of Ribosome-recycling factor from Listeria monocytogenes serotype 4a (strain HCC23).